The chain runs to 101 residues: MAKTSMIHRDIKRAKLAKKFAGKRDALKKILSSQDASYEEKIDASTKLQKLPRDSSPSRHRNRCELSGRPRGVYRKFGLGRNMLRKATMNGDVPGLRKASW.

Residues Ser-33 to Arg-69 are disordered. Residues Leu-51–Gly-68 are compositionally biased toward basic and acidic residues.

Belongs to the universal ribosomal protein uS14 family. In terms of assembly, part of the 30S ribosomal subunit. Contacts proteins S3 and S10.

In terms of biological role, binds 16S rRNA, required for the assembly of 30S particles and may also be responsible for determining the conformation of the 16S rRNA at the A site. The protein is Small ribosomal subunit protein uS14 of Xanthomonas axonopodis pv. citri (strain 306).